A 140-amino-acid chain; its full sequence is Pro-Viral epidermal growth factor (140 aa).

Positions 1–18 (MSMKYLMLLFAAMIIRSF) are cleaved as a signal peptide. Residues 19-100 (ADSGNAIETT…SENPNTTTSY (82 aa)) are Extracellular-facing. N34 carries N-linked (GlcNAc...) asparagine; by host glycosylation. Residues 41-81 (AIRLCGPEGDGYCLHGDCIHARDIDGMYCRCSHGYTGIRCQ) enclose the EGF-like domain. Cystine bridges form between C45-C58, C53-C69, and C71-C80. A glycan (N-linked (GlcNAc...) asparagine; by host) is linked at N95. Residues 101-121 (IPSPGIMLVLVGIIIITCCLL) traverse the membrane as a helical segment. Topologically, residues 122–140 (SVYRFTRRTKLPIQDMVVP) are cytoplasmic.

It belongs to the orthopoxvirus OPG019 family. In terms of assembly, viral epidermal growth factor interacts with host EGFR and promotes EGFR dimerization. Cleaved at the cell surface by host ADAM10, thereby releasing the secreted form of VGF.

The protein resides in the host membrane. It localises to the secreted. Stimulates cellular proliferation (hyperplasia)and mobility around infected cells to promote rapid and efficient spread of infection. This effect is beneficial for virus replication in vivo, because poxviruses replicate possibly better in proliferating cells than in quiescent cells. Acts by binding host EGFR, inducing its dimerization, autophosphorylation and leading to activation of several cellular pathways regulating cell proliferation or cell survival. The activation by host EGFR of mitogen activated protein kinases (MAPK) and extracellular-signal regulated kinases (ERK) are essential for the positive effect of vaccinia growth factor on poxvirus virulence in vivo. The chain is Pro-Viral epidermal growth factor (OPG019) from Bos taurus (Bovine).